The chain runs to 318 residues: MKEYKTIDLFAGIGGIRLGFEAFGCKNVFSSEWDKYAQSMYEVNFGEKPFGDINDISPSDIPDHDILLAGFPCQPFSIAGKGLGFADTRGTLFFNIEAILKAKKPKAFLLENVKRLTTHDNGNTFKVINDKLNKLGYTVYHKVLNTLDFGLPQKRERIYIVGFLDKLHFEFPKPIGKYEELSNILESDDVVPNNYFLSDELKRKRLSSITKDVPYPSIWHENISGNVSALPYSCALSVGGSYNYLVVNGVRRLTGPEMLRLQGFPDTFEINIPYSQVRKVAGNSVSVPVIRAIAGSMINSLNMATRKIYQAIQLSLLD.

One can recognise an SAM-dependent MTase C5-type domain in the interval 4–304; the sequence is YKTIDLFAGI…GSMINSLNMA (301 aa). Cys-73 is a catalytic residue.

It belongs to the class I-like SAM-binding methyltransferase superfamily. C5-methyltransferase family.

It catalyses the reaction a 2'-deoxycytidine in DNA + S-adenosyl-L-methionine = a 5-methyl-2'-deoxycytidine in DNA + S-adenosyl-L-homocysteine + H(+). Functionally, a methylase, recognizes the double-stranded sequence 5'-RGCGCY-3', methylates C-? on both strands, and protects the DNA from cleavage by the HaeII endonuclease. The polypeptide is Type II methyltransferase M.HaeII (haeIIM) (Haemophilus aegyptius).